Consider the following 387-residue polypeptide: Major outer membrane porin (387 aa).

Positions 1–22 (MKKLLKSVLAFAVLGSASSLHA) are cleaved as a signal peptide.

The protein belongs to the chlamydial porin (CP) (TC 1.B.2) family. In terms of assembly, part of a disulfide cross-linked outer membrane complex (COMC) composed of the major outer membrane porin (MOMP), the small cysteine-rich protein (OmcA) and the large cysteine-rich periplasmic protein (OmcB).

Its subcellular location is the cell outer membrane. In terms of biological role, in elementary bodies (EBs, the infectious stage, which is able to survive outside the host cell) provides the structural integrity of the outer envelope through disulfide cross-links with the small cysteine-rich protein and the large cysteine-rich periplasmic protein. It has been described in publications as the Sarkosyl-insoluble COMC (Chlamydia outer membrane complex), and serves as the functional equivalent of peptidoglycan. Permits diffusion of specific solutes through the outer membrane. This chain is Major outer membrane porin (ompA), found in Chlamydia muridarum (strain MoPn / Nigg).